Here is a 142-residue protein sequence, read N- to C-terminus: Large ribosomal subunit protein uL24 (142 aa).

Residues 1–11 (MKVNPFVSSDS) show a composition bias toward polar residues. Residues 1–24 (MKVNPFVSSDSGKSRKAHFNAPSH) are disordered.

The protein belongs to the universal ribosomal protein uL24 family.

The chain is Large ribosomal subunit protein uL24 (rpl-26) from Caenorhabditis elegans.